We begin with the raw amino-acid sequence, 148 residues long: Snaclec 3 (148 aa).

A signal peptide spans 1–23 (MGRFISVSFGLLVVFLSLSGTEA). Disulfide bonds link C27-C38, C55-C144, and C121-C136. The 112-residue stretch at 34 to 145 (YDQNCYKVFT…CSSTHNFVCK (112 aa)) folds into the C-type lectin domain.

Belongs to the snaclec family. As to quaternary structure, heterodimer; disulfide-linked.

It is found in the secreted. Functionally, interferes with one step of hemostasis (modulation of platelet aggregation, or coagulation cascade, for example). The chain is Snaclec 3 from Daboia siamensis (Eastern Russel's viper).